The primary structure comprises 732 residues: Elongation factor 2 (732 aa).

Positions 19–228 (ELVRNIGIVA…TKITFKDIVE (210 aa)) constitute a tr-type G domain. GTP-binding positions include 28–35 (AHIDHGKT), 94–98 (DTPGH), and 148–151 (NKID). Residue His-598 is modified to Diphthamide.

Belongs to the TRAFAC class translation factor GTPase superfamily. Classic translation factor GTPase family. EF-G/EF-2 subfamily.

It localises to the cytoplasm. In terms of biological role, catalyzes the GTP-dependent ribosomal translocation step during translation elongation. During this step, the ribosome changes from the pre-translocational (PRE) to the post-translocational (POST) state as the newly formed A-site-bound peptidyl-tRNA and P-site-bound deacylated tRNA move to the P and E sites, respectively. Catalyzes the coordinated movement of the two tRNA molecules, the mRNA and conformational changes in the ribosome. This is Elongation factor 2 from Thermoplasma volcanium (strain ATCC 51530 / DSM 4299 / JCM 9571 / NBRC 15438 / GSS1).